Consider the following 38-residue polypeptide: Mu-agatoxin-Hc1c (38 aa).

4 disulfide bridges follow: Cys3–Cys19, Cys10–Cys24, Cys18–Cys34, and Cys26–Cys32. Ser38 carries the serine amide modification.

It belongs to the neurotoxin 07 (Beta/delta-agtx) family. 02 (aga-3) subfamily. Expressed by the venom gland.

The protein resides in the secreted. Insecticidal neurotoxin that induces irreversible neuromuscular blockade in house crickets (A.domesticus). Modifies presynaptic voltage-gated sodium channels (Nav), causing them to open at the normal resting potential of the nerve. This leads to spontaneous release of neurotransmitter and repetitive action potentials in motor neurons. This is Mu-agatoxin-Hc1c from Hololena curta (Funnel-web spider).